Consider the following 77-residue polypeptide: Putative sulfur carrier protein YedF (77 aa).

C17 acts as the Cysteine persulfide intermediate in catalysis.

Belongs to the sulfur carrier protein TusA family.

The chain is Putative sulfur carrier protein YedF (yedF) from Escherichia coli O157:H7.